The following is a 289-amino-acid chain: 4-hydroxy-tetrahydrodipicolinate synthase (289 aa).

T44 is a pyruvate binding site. Y132 serves as the catalytic Proton donor/acceptor. K161 (schiff-base intermediate with substrate) is an active-site residue. I201 is a pyruvate binding site.

The protein belongs to the DapA family. As to quaternary structure, homotetramer; dimer of dimers.

The protein localises to the cytoplasm. The enzyme catalyses L-aspartate 4-semialdehyde + pyruvate = (2S,4S)-4-hydroxy-2,3,4,5-tetrahydrodipicolinate + H2O + H(+). It functions in the pathway amino-acid biosynthesis; L-lysine biosynthesis via DAP pathway; (S)-tetrahydrodipicolinate from L-aspartate: step 3/4. In terms of biological role, catalyzes the condensation of (S)-aspartate-beta-semialdehyde [(S)-ASA] and pyruvate to 4-hydroxy-tetrahydrodipicolinate (HTPA). In Methanocaldococcus jannaschii (strain ATCC 43067 / DSM 2661 / JAL-1 / JCM 10045 / NBRC 100440) (Methanococcus jannaschii), this protein is 4-hydroxy-tetrahydrodipicolinate synthase.